Here is a 152-residue protein sequence, read N- to C-terminus: 3-dehydroquinate dehydratase (152 aa).

Catalysis depends on Tyr23, which acts as the Proton acceptor. The substrate site is built by Asn75, His81, and Asp88. His101 functions as the Proton donor in the catalytic mechanism. Substrate-binding positions include 102 to 103 (IS) and Arg112.

It belongs to the type-II 3-dehydroquinase family. Homododecamer.

It catalyses the reaction 3-dehydroquinate = 3-dehydroshikimate + H2O. It functions in the pathway metabolic intermediate biosynthesis; chorismate biosynthesis; chorismate from D-erythrose 4-phosphate and phosphoenolpyruvate: step 3/7. In terms of biological role, catalyzes a trans-dehydration via an enolate intermediate. This is 3-dehydroquinate dehydratase from Alkalilimnicola ehrlichii (strain ATCC BAA-1101 / DSM 17681 / MLHE-1).